A 251-amino-acid polypeptide reads, in one-letter code: Octanoyltransferase (251 aa).

A BPL/LPL catalytic domain is found at Asp-49–Leu-230. Substrate-binding positions include Arg-87–His-94, Ala-160–Gly-162, and Gly-173–Ala-175. The active-site Acyl-thioester intermediate is the Cys-191.

It belongs to the LipB family.

It is found in the cytoplasm. The catalysed reaction is octanoyl-[ACP] + L-lysyl-[protein] = N(6)-octanoyl-L-lysyl-[protein] + holo-[ACP] + H(+). Its pathway is protein modification; protein lipoylation via endogenous pathway; protein N(6)-(lipoyl)lysine from octanoyl-[acyl-carrier-protein]: step 1/2. Its function is as follows. Catalyzes the transfer of endogenously produced octanoic acid from octanoyl-acyl-carrier-protein onto the lipoyl domains of lipoate-dependent enzymes. Lipoyl-ACP can also act as a substrate although octanoyl-ACP is likely to be the physiological substrate. This chain is Octanoyltransferase, found in Corynebacterium efficiens (strain DSM 44549 / YS-314 / AJ 12310 / JCM 11189 / NBRC 100395).